The primary structure comprises 159 residues: MIENVMKEGFITTSYDSVVNWAKTGSLWPMTFGLACCAVEMIHSAAARYDLARFGAEVFRASPRQADLMIVAGTLCNKMAPALRKVYDQMSEPRWVLSMGSCANGGGYYHYSYSVVRGCDRIVPVDVYVPGCPPTAEALIYGILQLQQKIRRSHTIARA.

[4Fe-4S] cluster-binding residues include C36, C37, C102, and C132.

It belongs to the complex I 20 kDa subunit family. As to quaternary structure, NDH-1 is composed of 14 different subunits. Subunits NuoB, C, D, E, F, and G constitute the peripheral sector of the complex. [4Fe-4S] cluster serves as cofactor.

It is found in the cell inner membrane. It catalyses the reaction a quinone + NADH + 5 H(+)(in) = a quinol + NAD(+) + 4 H(+)(out). In terms of biological role, NDH-1 shuttles electrons from NADH, via FMN and iron-sulfur (Fe-S) centers, to quinones in the respiratory chain. Couples the redox reaction to proton translocation (for every two electrons transferred, four hydrogen ions are translocated across the cytoplasmic membrane), and thus conserves the redox energy in a proton gradient. The polypeptide is NADH-quinone oxidoreductase subunit B (Verminephrobacter eiseniae (strain EF01-2)).